Consider the following 927-residue polypeptide: Probable UDP-N-acetylglucosamine--peptide N-acetylglucosaminyltransferase SPINDLY (927 aa).

The disordered stretch occupies residues 1 to 31 (MGRPGMDSSEGRESNGVVPERNGGAVPAKQQ). TPR repeat units lie at residues 34–67 (GKDTLRYANILRSRNKFAEALQLYNNVLEKDEAN), 68–101 (VEALIGKGICLQAQSLPMQAIECFNEAVRIDPGN), 102–135 (ACALTYCGMIYKDEGHLVEAAEAYQKARNADPSY), 143–176 (AIVLTDLGTSLKLAGNTEEGIQKYCEALEVDSHY), 177–210 (APAYYNLGVVYSEMMQFDLALTCYEKAALERPLY), 211–244 (AEAYCNMGVIYKNRGELEAAIACYERCLTISPNF), 252–285 (AIALTDLGTKVKIEGDINQGVAYYKKALFYNWHY), 286–319 (ADAMYNLGVAYGEMLNFEMAIVFYELALHFNPRC), 320–353 (AEACNNLGVIYKDRDNLDKAVECYQMALSIKPNF), 355–387 (QSLNNLGVVYTVQGKMDAASSMIQKAIFANSTY), and 388–421 (AEAYNNLGVLYRDAGSITSAVQAYEKCLQIDPDS). The tract at residues 422–927 (RNAGQNRLLA…KVEANGHISR (506 aa)) is catalytic region.

Belongs to the glycosyltransferase 41 family. O-GlcNAc transferase subfamily.

Its subcellular location is the nucleus. It catalyses the reaction L-seryl-[protein] + UDP-N-acetyl-alpha-D-glucosamine = 3-O-(N-acetyl-beta-D-glucosaminyl)-L-seryl-[protein] + UDP + H(+). It carries out the reaction L-threonyl-[protein] + UDP-N-acetyl-alpha-D-glucosamine = 3-O-(N-acetyl-beta-D-glucosaminyl)-L-threonyl-[protein] + UDP + H(+). The protein operates within protein modification; protein glycosylation. Probable O-linked N-acetylglucosamine transferase (OGT) involved in various processes such as gibberellin (GA) signaling pathway. OGTs catalyze the addition of nucleotide-activated sugars directly onto the polypeptide through O-glycosidic linkage with the hydroxyl of serine or threonine. Probably acts by adding O-linked sugars to yet unknown proteins. This is Probable UDP-N-acetylglucosamine--peptide N-acetylglucosaminyltransferase SPINDLY (SPY) from Oryza sativa subsp. japonica (Rice).